The sequence spans 83 residues: Beta-defensin 119 (83 aa).

The N-terminal stretch at 1–20 is a signal peptide; it reads MKFLFLFLAILLAMEPVVSG. 3 disulfide bridges follow: Cys27-Cys54, Cys34-Cys48, and Cys38-Cys55.

This sequence belongs to the beta-defensin family.

Its subcellular location is the secreted. Functionally, has antibacterial activity. This is Beta-defensin 119 (DEFB119) from Bos taurus (Bovine).